The primary structure comprises 704 residues: 1,4-alpha-glucan-branching enzyme (704 aa).

Trp94 and Lys131 together coordinate (1,4-alpha-D-glucosyl)n. Phosphoserine is present on Ser190. Catalysis depends on Asp356, which acts as the Nucleophile. The active-site Proton donor is the Glu417.

Belongs to the glycosyl hydrolase 13 family. GlgB subfamily.

The protein localises to the cytoplasm. It catalyses the reaction Transfers a segment of a (1-&gt;4)-alpha-D-glucan chain to a primary hydroxy group in a similar glucan chain.. Its pathway is glycan biosynthesis; glycogen biosynthesis. Functionally, glycogen-branching enzyme participates in the glycogen biosynthetic process along with glycogenin and glycogen synthase. Generates alpha-1,6-glucosidic branches from alpha-1,4-linked glucose chains, to increase solubility of the glycogen polymer. The polypeptide is 1,4-alpha-glucan-branching enzyme (GLC3) (Saccharomyces cerevisiae (strain ATCC 204508 / S288c) (Baker's yeast)).